Here is a 458-residue protein sequence, read N- to C-terminus: MGKEKSHINVVVIGHVDSGKSTTTGHLIYKCGGIDKRTIEKFEKEAAELGKGSFKYAWVLDKLKAERERGITIDIALWKFETPKYQVTVIDAPGHRDFIKNMITGTSQADCAILIIAGGVGEFEAGISKDGQTREHALLAFTLGVRQLIVAVNKMDSVKWDESRFQEIVKETSNFIKKVGYNPKTVPFVPISGWNGDNMIEATTNAPWYKGWEKETKAGVVKGKTLLEAIDAIEQPSRPTDKPLRLPLQDVYKIGGIGTVPVGRVETGVIKPGMVVTFAPAGVTTEVKSVEMHHEQLEQGVPGDNVGFNVKNVSVKEIRRGNVCGDAKNDPPKGCASFNATVIVLNHPGQISAGYSPVLDCHTAHIACRFDELLEKNDRRSGKKLEDHPKFLKSGDAALVKFVPSKPMCVEAFSEYPPLGRFAVRDMRQTVAVGVIKSVDKTEKAAKVTKAAQKAAKK.

Residue glycine 2 is modified to N,N,N-trimethylglycine; by EFM7. The residue at position 3 (lysine 3) is an N6,N6-dimethyllysine; by EFM7; alternate. Lysine 3 carries the N6-methyllysine; by EFM7; alternate modification. The region spanning 5 to 240 is the tr-type G domain; that stretch reads KSHINVVVIG…DAIEQPSRPT (236 aa). A G1 region spans residues 14 to 21; it reads GHVDSGKS. Serine 18 is subject to Phosphoserine. GTP-binding residues include serine 21 and threonine 22. Residue lysine 30 is modified to N6-methyllysine; by EFM1. Residues 70-74 form a G2 region; sequence GITID. Phosphothreonine is present on threonine 72. The residue at position 79 (lysine 79) is an N6,N6,N6-trimethyllysine; by EFM5. Threonine 82 carries the post-translational modification Phosphothreonine. The segment at 91 to 94 is G3; the sequence is DAPG. GTP contacts are provided by asparagine 153, lysine 154, and aspartate 156. Positions 153 to 156 are G4; it reads NKMD. Serine 163 bears the Phosphoserine mark. The GTP site is built by serine 192, glycine 193, and tryptophan 194. A G5 region spans residues 192–194; the sequence is SGW. Glycyl lysine isopeptide (Lys-Gly) (interchain with G-Cter in ubiquitin) cross-links involve residues lysine 224, lysine 242, and lysine 253. A Phosphothreonine modification is found at threonine 259. Residue lysine 271 forms a Glycyl lysine isopeptide (Lys-Gly) (interchain with G-Cter in ubiquitin) linkage. A Phosphoserine modification is found at serine 289. Lysine 316 carries the N6,N6-dimethyllysine; by EFM4; alternate modification. Position 316 is an N6-methyllysine; by EFM4; alternate (lysine 316). Lysine 390 is modified (N6-methyllysine; by EFM6). Lysine 393 is covalently cross-linked (Glycyl lysine isopeptide (Lys-Gly) (interchain with G-Cter in ubiquitin)). Residue serine 414 is modified to Phosphoserine. At threonine 430 the chain carries Phosphothreonine. A Glycyl lysine isopeptide (Lys-Gly) (interchain with G-Cter in ubiquitin) cross-link involves residue lysine 437. Position 458 is a lysine methyl ester (lysine 458).

Belongs to the TRAFAC class translation factor GTPase superfamily. Classic translation factor GTPase family. EF-Tu/EF-1A subfamily. As to quaternary structure, the eukaryotic elongation factor 1 complex (eEF1) is probably a heterohexamer. Two trimeric complexes, each composed of eEF1A (TEF1 or TEF2), eEF1Balpha (EFB1) and eEF1Bgamma (CAM1 or TEF4), are probably dimerized via the eF1Bgamma subunits. Interacts with eEF1Balpha; the interaction is direct. Interacts with GCN2 (via C-terminus); this interaction is direct, occurs in amino acid-repleted cells, may be stabilized in a ribosome-dependent manner, reduces GCN2-mediated eIF-2-alpha phosphorylation and is lost in amino acid-starved cells and by uncharged tRNAs. Interacts with CEX1. Interacts with elongation factor 3 (YEF3 or HEF3). Interacts with NAP1. Interacts with SRV2. Interacts with chaperone ZPR1; the interaction is required for its proper folding. Binds to actin and forms a ternary complex with BNI1 and profilin. Interacts with the proteasome, probably via RPT1. Associates with ribosomes. Post-translationally, S-thiolated in response to oxidative stress, probably inhibiting the protein and causing a reduction in protein synthesis. Glutaminylated at Glu-45. An L-glutamine is linked to Glu-45 via the alpha amino group. This glutaminylation is yeast-specific and not essential for the normal functions of eEF1A. However, eEF1A glutaminylation slightly reduced growth under antibiotic-induced translational stress conditions.

The protein localises to the cytoplasm. The protein resides in the cytoskeleton. It participates in protein biosynthesis; polypeptide chain elongation. Inhibited by narciclasine. Functionally, GTP-binding component of the eukaryotic elongation factor 1 complex (eEF1). In its active GTP-bound form, binds to and delivers aminoacyl-tRNA to the A-site of ribosomes during protein biosynthesis. In the presence of a correct codon-anticodon match between the aminoacyl-tRNA and the A-site codon of the ribosome-bound mRNA, the ribosome acts as a GTPase activator and the GTP is hydrolyzed. The inactive GDP-bound form leaves the ribosome and must be recycled by its guanine nucleotide exchange factor (GEF) (eEF1B subcomplex) before binding another molecule of aminoacyl-tRNA. Required for nuclear export of aminoacyl-tRNAs. May also be involved in translational quality control by targeting cotranslationally damaged proteins to the proteasome. Also exhibits actin filament-binding and -bundling activities and is involved in cytoskeleton organization. Plays a role as a negative regulator of GCN2 kinase activity by inhibiting GCN2-mediated eIF-2-alpha phosphorylation in amino acid-repleted cells. In Saccharomyces cerevisiae (strain ATCC 204508 / S288c) (Baker's yeast), this protein is Elongation factor 1-alpha (TEF1).